The primary structure comprises 387 residues: Phosphoglycerate kinase (387 aa).

Substrate is bound by residues 21–23 (DLN), R36, 59–62 (HLGR), R113, and R146. ATP-binding positions include K197, E314, and 340-343 (GGDT).

This sequence belongs to the phosphoglycerate kinase family. In terms of assembly, monomer.

The protein resides in the cytoplasm. The catalysed reaction is (2R)-3-phosphoglycerate + ATP = (2R)-3-phospho-glyceroyl phosphate + ADP. The protein operates within carbohydrate degradation; glycolysis; pyruvate from D-glyceraldehyde 3-phosphate: step 2/5. The polypeptide is Phosphoglycerate kinase (Pseudomonas syringae pv. tomato (strain ATCC BAA-871 / DC3000)).